Here is a 194-residue protein sequence, read N- to C-terminus: Large ribosomal subunit protein uL5 (194 aa).

It belongs to the universal ribosomal protein uL5 family. As to quaternary structure, part of the 50S ribosomal subunit; part of the 5S rRNA/L5/L18/L25 subcomplex. Contacts the 5S rRNA and the P site tRNA. Forms a bridge to the 30S subunit in the 70S ribosome.

Its function is as follows. This is one of the proteins that bind and probably mediate the attachment of the 5S RNA into the large ribosomal subunit, where it forms part of the central protuberance. In the 70S ribosome it contacts protein S13 of the 30S subunit (bridge B1b), connecting the 2 subunits; this bridge is implicated in subunit movement. Contacts the P site tRNA; the 5S rRNA and some of its associated proteins might help stabilize positioning of ribosome-bound tRNAs. This chain is Large ribosomal subunit protein uL5, found in Frankia alni (strain DSM 45986 / CECT 9034 / ACN14a).